A 374-amino-acid chain; its full sequence is Double homeobox protein 4C (374 aa).

The segment covering 1–10 (MALPTPSDST) has biased composition (polar residues). Disordered stretches follow at residues 1 to 24 (MALP…RRRL), 72 to 102 (SRQL…TAVT), and 218 to 374 (LQPS…YELL). DNA-binding regions (homeobox) lie at residues 19–78 (GRRR…LRQH) and 94–153 (GRRK…PGQG). Residues 265–274 (KSREDRDPQR) are compositionally biased toward basic and acidic residues. Composition is skewed to low complexity over residues 278-302 (PGPC…LAPP) and 319-329 (AGAAWEPQAGA). Residues 354–374 (QPLQEPGRSSTVTSSLLYELL) are compositionally biased toward polar residues.

In terms of assembly, may interact with MYF5; regulates MYF5 expression. Expressed in muscles, as well as in primary myoblasts and myotubes (at protein level).

The protein localises to the nucleus. Its subcellular location is the cytoplasm. Down-regulates MYOD1 expression and may up-regulate MYF5 expression. May regulate microRNA (miRNA) transcription, up-regulating the expression of some myogenic miRNAs, including MIR1-1, MIR133A2, MIR133B and MIR206. Impairs the differentiation of myoblasts and may be involved in muscle regeneration. Reduces DUX4-induced nuclear localization of CTNNB1/beta-catenin and its subsequent activation of target genes. The chain is Double homeobox protein 4C (DUX4L9) from Homo sapiens (Human).